Reading from the N-terminus, the 234-residue chain is Preprocaerulein type-4 (234 aa).

Positions M1–A26 are cleaved as a signal peptide. The propeptide occupies D27–G73. A Sulfotyrosine modification is found at Y77. At F83 the chain carries Phenylalanine amide. A propeptide spanning residues D87–G137 is cleaved from the precursor. A Sulfotyrosine modification is found at Y141. Position 147 is a phenylalanine amide (F147). Residues D151 to G152 constitute a propeptide that is removed on maturation. At Y156 the chain carries Sulfotyrosine. F162 carries the post-translational modification Phenylalanine amide. Positions D166–G216 are excised as a propeptide. Residues L198–D234 are disordered. At Y220 the chain carries Sulfotyrosine. F226 bears the Phenylalanine amide mark. Residues N230 to D234 constitute a propeptide that is removed on maturation.

It belongs to the gastrin/cholecystokinin family. Expressed by the skin glands.

The protein resides in the secreted. The pharmacological activities of caerulein are quite similar to the physiological activities of gastrin and related peptides. The polypeptide is Preprocaerulein type-4 (Xenopus borealis (Kenyan clawed frog)).